The primary structure comprises 255 residues: ParA family protein TC_0871 (255 aa).

It belongs to the ParA family.

This chain is ParA family protein TC_0871, found in Chlamydia muridarum (strain MoPn / Nigg).